The chain runs to 485 residues: Glucose-6-phosphate 1-dehydrogenase (485 aa).

Residues Arg-46, 89 to 90, and Lys-144 contribute to the NADP(+) site; that span reads DI. 4 residues coordinate substrate: His-174, Lys-178, Glu-212, and Asp-231. Catalysis depends on His-236, which acts as the Proton acceptor. Lys-334 lines the substrate pocket.

Belongs to the glucose-6-phosphate dehydrogenase family.

It catalyses the reaction D-glucose 6-phosphate + NADP(+) = 6-phospho-D-glucono-1,5-lactone + NADPH + H(+). The protein operates within carbohydrate degradation; pentose phosphate pathway; D-ribulose 5-phosphate from D-glucose 6-phosphate (oxidative stage): step 1/3. In terms of biological role, catalyzes the oxidation of glucose 6-phosphate to 6-phosphogluconolactone. The polypeptide is Glucose-6-phosphate 1-dehydrogenase (Zymomonas mobilis subsp. mobilis (strain ATCC 31821 / ZM4 / CP4)).